Here is a 92-residue protein sequence, read N- to C-terminus: Small ribosomal subunit protein bS16 (92 aa).

Belongs to the bacterial ribosomal protein bS16 family.

The protein is Small ribosomal subunit protein bS16 of Staphylococcus carnosus (strain TM300).